A 511-amino-acid chain; its full sequence is Transcription factor bHLH28 (511 aa).

The region spanning 339–388 is the bHLH domain; that stretch reads DKPLNHVEAERMRREKLNHRFYALRAVVPNVSKMDKTSLLEDAVCYINEL.

Homodimer.

It localises to the nucleus. This chain is Transcription factor bHLH28 (BHLH28), found in Arabidopsis thaliana (Mouse-ear cress).